The sequence spans 235 residues: tRNA1(Val) (adenine(37)-N6)-methyltransferase (235 aa).

Belongs to the methyltransferase superfamily. tRNA (adenine-N(6)-)-methyltransferase family.

The protein localises to the cytoplasm. It carries out the reaction adenosine(37) in tRNA1(Val) + S-adenosyl-L-methionine = N(6)-methyladenosine(37) in tRNA1(Val) + S-adenosyl-L-homocysteine + H(+). Functionally, specifically methylates the adenine in position 37 of tRNA(1)(Val) (anticodon cmo5UAC). The sequence is that of tRNA1(Val) (adenine(37)-N6)-methyltransferase from Flavobacterium johnsoniae (strain ATCC 17061 / DSM 2064 / JCM 8514 / BCRC 14874 / CCUG 350202 / NBRC 14942 / NCIMB 11054 / UW101) (Cytophaga johnsonae).